Here is a 617-residue protein sequence, read N- to C-terminus: UvrABC system protein C (617 aa).

The GIY-YIG domain maps to 12 to 91; sequence EKPGVYLMKD…IKKYKPKYNV (80 aa). Residues 203–238 enclose the UVR domain; the sequence is EWLVEKLKEEMQKAADELRFEEAARLRDQIFAIEKI.

This sequence belongs to the UvrC family. In terms of assembly, interacts with UvrB in an incision complex.

It localises to the cytoplasm. In terms of biological role, the UvrABC repair system catalyzes the recognition and processing of DNA lesions. UvrC both incises the 5' and 3' sides of the lesion. The N-terminal half is responsible for the 3' incision and the C-terminal half is responsible for the 5' incision. This is UvrABC system protein C from Caldanaerobacter subterraneus subsp. tengcongensis (strain DSM 15242 / JCM 11007 / NBRC 100824 / MB4) (Thermoanaerobacter tengcongensis).